Consider the following 459-residue polypeptide: Glutathione reductase (459 aa).

Residues serine 14, glycine 15, glutamate 34, threonine 41, cysteine 42, lysine 50, and alanine 114 each coordinate FAD. A glutathione-binding site is contributed by serine 14. The cysteines at positions 42 and 47 are disulfide-linked. 5 residues coordinate NADP(+): isoleucine 177, glutamate 180, arginine 197, lysine 203, and glycine 262. Positions 313 and 321 each coordinate FAD. Residue arginine 329 participates in glutathione binding. Alanine 351 lines the NADP(+) pocket. An FAD-binding site is contributed by histidine 448. Histidine 448 functions as the Proton acceptor in the catalytic mechanism.

Belongs to the class-I pyridine nucleotide-disulfide oxidoreductase family. In terms of assembly, homodimer. FAD is required as a cofactor.

The protein localises to the cytoplasm. The enzyme catalyses 2 glutathione + NADP(+) = glutathione disulfide + NADPH + H(+). Catalyzes the reduction of glutathione disulfide (GSSG) to reduced glutathione (GSH). Constitutes the major mechanism to maintain a high GSH:GSSG ratio in the cytosol. The protein is Glutathione reductase (gor) of Nostoc sp. (strain PCC 7120 / SAG 25.82 / UTEX 2576).